The primary structure comprises 685 residues: UvrABC system protein C (685 aa).

One can recognise a GIY-YIG domain in the interval 15–93 (ALPGVYRYFD…IKTQNPRFNI (79 aa)). The region spanning 214–249 (QELLQAMEARMMAYSGQLAFEQAAEVRNQMQALSRV) is the UVR domain. Residues 365 to 388 (AQGGDHAPAAQGGDPPPAASSGGH) are compositionally biased toward low complexity. A disordered region spans residues 365-391 (AQGGDHAPAAQGGDPPPAASSGGHPLR).

Belongs to the UvrC family. As to quaternary structure, interacts with UvrB in an incision complex.

It localises to the cytoplasm. Its function is as follows. The UvrABC repair system catalyzes the recognition and processing of DNA lesions. UvrC both incises the 5' and 3' sides of the lesion. The N-terminal half is responsible for the 3' incision and the C-terminal half is responsible for the 5' incision. The chain is UvrABC system protein C from Verminephrobacter eiseniae (strain EF01-2).